Reading from the N-terminus, the 299-residue chain is MSQDPILTSKGSQEEEDFFGLDNFFPEPESPLPPPFSFASYDIPANIDFYVPDHRKSLILRLVGSHPLWGHHLWNTARTLSTYLLETPQITQSRHVLELGAGAGLPSIVCVLAGSSKVIVTDYSDEGLLDNLRFNVDVNLEGEEKERIAVDGHVWGQSVDPLLGHLPKGQKYDLLILSDLVFNHSQHDALIKTVEATLTSSSTQSYDPSNPSAPLTEPSILVFFTHHRPHLAHADMAFFPRLAESGNGWAYEKVVEEWAGAMFENDPGDKKVRGTVHGWRAWRVRDGEERGEKPSRISL.

S-adenosyl-L-methionine-binding positions include tryptophan 74, glycine 100–glycine 102, aspartate 122, tryptophan 155, and serine 178.

Belongs to the class I-like SAM-binding methyltransferase superfamily. EFM7 family.

It is found in the cytoplasm. Its function is as follows. S-adenosyl-L-methionine-dependent protein methyltransferase that trimethylates the N-terminal glycine 'Gly-2' of elongation factor 1-alpha, before also catalyzing the mono- and dimethylation of 'Lys-3'. This is Protein N-terminal and lysine N-methyltransferase EFM7 from Cryptococcus neoformans var. neoformans serotype D (strain B-3501A) (Filobasidiella neoformans).